Reading from the N-terminus, the 360-residue chain is Nucleoporin SEH1 (360 aa).

WD repeat units lie at residues 10–49 (DHKD…EWHC), 55–96 (THSG…SNDK), 111–152 (DSRT…NLSQ), 160–210 (SCKL…RKYA), 217–258 (TVTD…KELT), and 276–315 (NHNS…NWKC). Lys12 participates in a covalent cross-link: Glycyl lysine isopeptide (Lys-Gly) (interchain with G-Cter in SUMO2). A Phosphoserine modification is found at Ser190. A compositionally biased stretch (low complexity) spans 324–342 (SPVNGSSQQGNSNPSVGSN). A disordered region spans residues 324 to 360 (SPVNGSSQQGNSNPSVGSNIPSLQNSLNGSSAGRKHS). Over residues 343–354 (IPSLQNSLNGSS) the composition is skewed to polar residues.

Belongs to the WD repeat SEC13 family. In terms of assembly, component of the Nup107-160 subcomplex of the nuclear pore complex (NPC). The Nup107-160 subcomplex includes NUP160, NUP133, NUP107, NUP98, NUP85, NUP43, NUP37, SEH1 and SEC13. The SEH1 subunit appears to be only weakly associated with the Nup107-160 subcomplex. Component of the GATOR2 subcomplex, composed of MIOS, SEC13, SEH1L, WDR24 and WDR59. The GATOR2 complex interacts with CASTOR1 and CASTOR2; the interaction is negatively regulated by arginine. The GATOR2 complex interacts with SESN1, SESN2 and SESN3; the interaction is negatively regulated by amino acids. SESN1, SESN2 and SESN3 convey leucine availability via direct interaction with SEH1L and WDR24.

Its subcellular location is the chromosome. It is found in the centromere. The protein resides in the kinetochore. The protein localises to the nucleus. It localises to the nuclear pore complex. Its subcellular location is the lysosome membrane. The GATOR2 complex is negatively regulated by the upstream amino acid sensors CASTOR1 and SESN2, which sequester the GATOR2 complex in absence of amino acids. In the presence of abundant amino acids, GATOR2 is released from CASTOR1 and SESN2 and activated. Component of the Nup107-160 subcomplex of the nuclear pore complex (NPC). The Nup107-160 subcomplex is required for the assembly of a functional NPC. The Nup107-160 subcomplex is also required for normal kinetochore microtubule attachment, mitotic progression and chromosome segregation. This subunit plays a role in recruitment of the Nup107-160 subcomplex to the kinetochore. Functionally, as a component of the GATOR2 complex, functions as an activator of the amino acid-sensing branch of the mTORC1 signaling pathway. The GATOR2 complex indirectly activates mTORC1 through the inhibition of the GATOR1 subcomplex. GATOR2 probably acts as an E3 ubiquitin-protein ligase toward GATOR1. In the presence of abundant amino acids, the GATOR2 complex mediates ubiquitination of the NPRL2 core component of the GATOR1 complex, leading to GATOR1 inactivation. In the absence of amino acids, GATOR2 is inhibited, activating the GATOR1 complex. Within the GATOR2 complex, SEC13 and SEH1L are required to stabilize the complex. This is Nucleoporin SEH1 (SEH1L) from Bos taurus (Bovine).